The sequence spans 977 residues: Serine/threonine-protein kinase/endoribonuclease IRE1 (977 aa).

The N-terminal stretch at 1–18 (MPARRLLLLLTLLLPGLG) is a signal peptide. The Lumenal segment spans residues 19–443 (IFGSTSTVTL…EAPVDSMLKD (425 aa)). The N-linked (GlcNAc...) asparagine glycan is linked to N176. Residues 410–419 (TSENAPTTVS) are compositionally biased toward polar residues. A disordered region spans residues 410–434 (TSENAPTTVSRDVEEKPAHAPARPE). Residues 444-464 (MATIILSTFLLIGWVAFIITY) traverse the membrane as a helical segment. The Cytoplasmic portion of the chain corresponds to 465–977 (PLSMHQQQQL…PQPPVTPDAL (513 aa)). Positions 491–559 (QQQQQLPFHP…PSLEQDDGDE (69 aa)) are disordered. Over residues 513 to 552 (TSGPYSESSGTSSPSTSPRASNHSLCSGSSASKAGSSPSL) the composition is skewed to low complexity. The region spanning 571 to 832 (FCPKDVLGHG…AKHVLKHPFF (262 aa)) is the Protein kinase domain. ATP is bound by residues 577 to 585 (LGHGAEGTI), K599, and 643 to 645 (ELC). D688 serves as the catalytic Proton acceptor. Residues 690-693 (KPHN) and D711 contribute to the ATP site. S724 and S729 each carry phosphoserine. One can recognise a KEN domain in the interval 835-963 (LEKQLQFFQD…ERLFQPYYFH (129 aa)). The tract at residues 906–907 (NK) is interacts with hydroxy-aryl-aldehyde inhibitors. T973 carries the post-translational modification Phosphothreonine.

Belongs to the protein kinase superfamily. Ser/Thr protein kinase family. As to quaternary structure, monomer. Homodimer; disulfide-linked; homodimerization takes place in response to endoplasmic reticulum stress and promotes activation of the kinase and endoribonuclease activities. Dimer formation is driven by hydrophobic interactions within the N-terminal luminal domains and stabilized by disulfide bridges. Interacts (via the luminal region) with DNAJB9/ERdj4; interaction takes place in unstressed cells and promotes recruitment of HSPA5/BiP. Interacts (via the luminal region) with HSPA5/BiP; HSPA5/BiP is a negative regulator of the unfolded protein response (UPR) that prevents homodimerization of ERN1/IRE1 and subsequent activation of the protein. Interaction with HSPA5 also competitively inhibits ERN1 interaction with MANF. Interacts with PDIA6, a negative regulator of the UPR; the interaction is direct and disrupts homodimerization. Interacts with DAB2IP (via PH domain); the interaction occurs in a endoplasmic reticulum stress-induced dependent manner and is required for subsequent recruitment of TRAF2 to ERN1/IRE1. Interacts with TAOK3 and TRAF2. Interacts with RNF13. Interacts with LACC1. Interacts (when unphosphorylated) with DDRGK1; interaction is dependent on UFM1 and takes place in response to endoplasmic reticulum stress, regulating ERN1/IRE1-alpha stability. Interacts (via N-terminus) with P4HB/PDIA1; the interaction is enhanced by phosphorylation of P4HB by FAM20C in response to endoplasmic reticulum stress and results in attenuation of ERN1 activity. Interacts with TMBIM6; this interaction inhibits ERN1 activity. Interacts (via luminal domain) with MANF (via C-terminus); the interaction is decreased in the presence of increasing concentrations of Ca(2+). Mg(2+) is required as a cofactor. Autophosphorylated following homodimerization. Autophosphorylation promotes activation of the endoribonuclease domain. In response to ER stress, phosphorylated at Ser-724, Ser-729 and possibly Ser-726; phosphorylation promotes oligomerization and endoribonuclease activity. Dephosphorylated at Ser-724, Ser-729 and possibly Ser-726 by RPAP2 to abort failed ER-stress adaptation and trigger apoptosis. Phosphorylated at Ser-724; in response to the ER stressor tunicamycin. In terms of processing, ADP-ribosylated by PARP16 upon ER stress, which increases both kinase and endonuclease activities. As to expression, ubiquitously expressed. High levels observed in pancreatic tissue.

Its subcellular location is the endoplasmic reticulum membrane. It catalyses the reaction L-seryl-[protein] + ATP = O-phospho-L-seryl-[protein] + ADP + H(+). The catalysed reaction is L-threonyl-[protein] + ATP = O-phospho-L-threonyl-[protein] + ADP + H(+). The kinase domain is activated by trans-autophosphorylation following homodimerization. Kinase activity is required for activation of the endoribonuclease domain. Endoribonuclease activity is specifically inhibited by hydroxy-aryl-aldehydes (HAA). Serine/threonine-protein kinase and endoribonuclease that acts as a key sensor for the endoplasmic reticulum unfolded protein response (UPR). In unstressed cells, the endoplasmic reticulum luminal domain is maintained in its inactive monomeric state by binding to the endoplasmic reticulum chaperone HSPA5/BiP. Accumulation of misfolded proteins in the endoplasmic reticulum causes release of HSPA5/BiP, allowing the luminal domain to homodimerize, promoting autophosphorylation of the kinase domain and subsequent activation of the endoribonuclease activity. The endoribonuclease activity is specific for XBP1 mRNA and excises 26 nucleotides from XBP1 mRNA. The resulting spliced transcript of XBP1 encodes a transcriptional activator protein that up-regulates expression of UPR target genes. Acts as an upstream signal for ER stress-induced GORASP2-mediated unconventional (ER/Golgi-independent) trafficking of CFTR to cell membrane by modulating the expression and localization of SEC16A. The protein is Serine/threonine-protein kinase/endoribonuclease IRE1 of Homo sapiens (Human).